We begin with the raw amino-acid sequence, 755 residues long: Polyribonucleotide nucleotidyltransferase (755 aa).

Residues D545 and D551 each contribute to the Mg(2+) site. The KH domain maps to 611–670 (PRITAITVPVNKIGEVIGPKGKTINSITEETGANISIEEDGTVYVSAASGAAAEAAIEKI). The 70-residue stretch at 682–751 (GERFLGTVVK…NRGKISLAPV (70 aa)) folds into the S1 motif domain.

It belongs to the polyribonucleotide nucleotidyltransferase family. Mg(2+) serves as cofactor.

Its subcellular location is the cytoplasm. It carries out the reaction RNA(n+1) + phosphate = RNA(n) + a ribonucleoside 5'-diphosphate. Functionally, involved in mRNA degradation. Catalyzes the phosphorolysis of single-stranded polyribonucleotides processively in the 3'- to 5'-direction. This Corynebacterium diphtheriae (strain ATCC 700971 / NCTC 13129 / Biotype gravis) protein is Polyribonucleotide nucleotidyltransferase.